Consider the following 1019-residue polypeptide: MYILVWKEGQQIRTFQDLEECGQFQTASNITDGQIFSINVTPTMSKGGETGETQLRRLMYLSASTEPEKCYAEYLADMAHVATLRNKQIGVSGFLLYSSPFFFEVIEGTDEELDFLFAKISADPRHVRCIVLANGPCTGRLYGEWHMKDSHIDNITKHPAIKTILFQIARSFSCMWSYLPKNAANMLLLGKNPNKQAPEPMSVVVTFIYLVEFSSILAHPGQTEQCADILAAFVDACVRNVEGTGAQVAKFITGICIAYWPINRAEDALIGLQQLSEDLAELRSQQRPGSALSLIYSRCGVHYGRALLCNAGFRKADFTLLGDCINTASRITSLSVKLKVPLLLSFEVRCVLGDEMREVLETSGLHKVKGRDQPVQVYQFNARELDSAMVRAKIEQLNPGSYRALCPVKPYESLLPAQRPPIFDDTPRENQPKLSQVQRRDSLVDRLSLIAKLAFPTSMMAGGEGQLITLTYISQAAHPMTRLDLASIQRIAFARNESSNITGSLLHVSGLFVQTLEGPKGAVVSLYLKIRQDKRHKDVVADFMAPSEGREYGSPLDMTSATEEMLTSFPPLQELLTHLAKPFISLETYVPTTVVRYLTAGNNPRNLQPVSVEVVLLATDICSFTPLSEKCSLTEVWTICKTIFVAFIRAIFNEGGEVIKLIGDCVTAYFPPTGADKAVHACQEIVTFCAQLGDAFHDVLDCRSVVACGVGLDFGQVIMAQCGSLGMTEFVVAGEVSARVMEVVALTREAGRAIVITEPLPDRLAPKLRDTGIIPCQEGVDGVPCYGNLGPEWELDVATIKKNIYGFHDARALAAMKKVDVGTNAPGRGAPAGGIPSSPKVRPPGRTNSVSSYTPDPNEALDPPMAESVFLDMCHQRGDTANNSIAVKLRQAANDDRLDLGRMLQGPHELMPVMQAIKHLTNLRMLNMSDNFVVDNNVGELVESCIPMRSLQVLDLSNNPGLTKVIALKRLIKHNTQVREFLLNGTRIAPTEQRKLQSSMNVNRLCASTDLKGSHKYEH.

The BLUF 1 domain maps to 55 to 148 (LRRLMYLSAS…GRLYGEWHMK (94 aa)). Positions 204–332 (VVTFIYLVEF…DCINTASRIT (129 aa)) constitute a Guanylate cyclase 1 domain. In terms of domain architecture, BLUF 2 spans 467 to 559 (LITLTYISQA…REYGSPLDMT (93 aa)). Residues 615-744 (VLLATDICSF…EVSARVMEVV (130 aa)) form the Guanylate cyclase 2 domain. Low complexity predominate over residues 825 to 839 (APGRGAPAGGIPSSP). The tract at residues 825 to 862 (APGRGAPAGGIPSSPKVRPPGRTNSVSSYTPDPNEALD) is disordered. The segment covering 846–855 (RTNSVSSYTP) has biased composition (polar residues).

The protein belongs to the adenylyl cyclase class-4/guanylyl cyclase family. As to quaternary structure, heterotetramer of two alpha and two beta subunits.

The protein localises to the cell projection. It is found in the cilium. Its subcellular location is the flagellum. The polypeptide is Photoactivated adenylate cyclase subunit alpha-like protein FB (Euglena gracilis).